A 4299-amino-acid polypeptide reads, in one-letter code: DNA-dependent protein kinase catalytic subunit (4299 aa).

Residues 551 to 590 (KDLNSTIKKENNNNNNNKNKNNNNNQTLTKEEISKSIKKL) are a coiled coil. Disordered regions lie at residues 557–577 (IKKE…NNQT), 613–633 (DEND…DQDN), 878–917 (NSSD…MKFK), and 1206–1230 (SSSK…EDGT). 4 stretches are compositionally biased toward low complexity: residues 562–575 (NNNN…NNNN), 617–631 (NNSN…NNDQ), 878–893 (NSSD…IDSG), and 1206–1226 (SSSK…NNNS). Position 2789 is a phosphoserine; by autocatalysis (Ser-2789). A phosphothreonine; by autocatalysis mark is found at Thr-2814 and Thr-2822. Positions 2832-2867 (SSSQSYGGTNNNTGSSQLSSSSSSSGSQSSSQNNSS) are enriched in low complexity. Disordered regions lie at residues 2832 to 2881 (SSSQ…PKLI) and 3535 to 3559 (TTSS…SSSQ). Residues 3031-3707 (KIKDISLNSN…YFPFKISSEQ (677 aa)) enclose the FAT domain. The PI3K/PI4K catalytic domain maps to 3887-4226 (FDTNVLVMGS…AKKKLELVNP (340 aa)). The G-loop stretch occupies residues 3893–3899 (VMGSLRK). The segment at 4092–4100 (GIGDRHLEN) is catalytic loop. The segment at 4112-4137 (GIDFGHAFGTATQFLPIPELMPFRLT) is activation loop. In terms of domain architecture, FATC spans 4267–4299 (VCSSVKEQIDCLIDQSTDPNILSRAWVGWNGAL).

This sequence belongs to the PI3/PI4-kinase family. DNAPK subfamily. In terms of processing, may be phosphorylated upon DNA damage. Could be autophosphorylated. Autophosphorylation induces a conformational change that leads to remodeling of the DNA-PK complex, requisite for efficient end processing and DNA repair. Autophosphorylated on Ser-2789, Thr-2814 and Thr-2822. Ser-2789 is a DNA damage-inducible phosphorylation site (inducible with ionizing radiation, IR).

Its subcellular location is the nucleus. It localises to the nucleolus. The catalysed reaction is L-seryl-[protein] + ATP = O-phospho-L-seryl-[protein] + ADP + H(+). The enzyme catalyses L-threonyl-[protein] + ATP = O-phospho-L-threonyl-[protein] + ADP + H(+). With respect to regulation, inhibited by wortmannin. Activity of the enzyme seems to be attenuated by autophosphorylation. Serine/threonine-protein kinase that acts as a molecular sensor for DNA damage. Is recruited to DNA ends by the Ku70/Ku80 heterodimer and is involved in DNA non-homologous end joining (NHEJ) required for double-strand break (DSB) repair and V(D)J recombination. This activity is only apparent when DNA damage is administered in G1 phase of the cell cycle. Required for efficient signaling of DNA double-stranded breaks via phosphorylation of H2AX during G1. The protein is DNA-dependent protein kinase catalytic subunit (dnapkcs) of Dictyostelium discoideum (Social amoeba).